A 148-amino-acid polypeptide reads, in one-letter code: Protoporphyrinogen IX oxidase (148 aa).

The next 4 membrane-spanning stretches (helical) occupy residues 7 to 27, 58 to 78, 86 to 106, and 128 to 148; these read YFLWVKAFHVIAVISWMAALF, SFIASPAMGFTLITGILMLLI, GGWLHAKLALVVLLLAYHFYC, and FNEAPTILMILIVILVVVKPF. A heme-binding site is contributed by His15. Residue Lys92 participates in heme binding.

This sequence belongs to the HemJ family. As to quaternary structure, homodimer. Heme b serves as cofactor.

The protein resides in the cell membrane. It catalyses the reaction protoporphyrinogen IX + 3 A = protoporphyrin IX + 3 AH2. It participates in porphyrin-containing compound metabolism; protoporphyrin-IX biosynthesis; protoporphyrin-IX from protoporphyrinogen-IX: step 1/1. Its function is as follows. Catalyzes the oxidation of protoporphyrinogen IX to protoporphyrin IX. Is involved in the biosynthesis of tetrapyrrole molecules like heme. Does not use oxygen or artificial electron acceptors such as menadione or benzoquinone. In Helicobacter pylori (strain ATCC 700392 / 26695) (Campylobacter pylori), this protein is Protoporphyrinogen IX oxidase.